We begin with the raw amino-acid sequence, 147 residues long: Microtubule-associated protein 1 light chain 3 gamma (147 aa).

Residues Ser-93 and Ser-96 each carry the phosphoserine; by TBK1 modification. The Phosphatidylethanolamine amidated glycine; alternate moiety is linked to residue Gly-126. Gly-126 is lipidated: Phosphatidylserine amidated glycine; alternate. The propeptide at 127–147 (CLESAAPRDGSSLEDRPCNPL) is removed in mature form.

It belongs to the ATG8 family. As to quaternary structure, 3 different light chains, LC1 (a cleavage product of MAP1B), LC2 (a cleavage product of MAP1A) and LC3 (produced by one of the MAP1LC3 genes), can associate with the MAP1A or MAP1B heavy chains. Interacts with TP53INP1 and TP53INP2. Interacts with CALCOCO2. Interacts with TECPR2. Interacts with TBC1D5. Found in a complex with UBQLN1 and UBQLN2. Interacts with UBQLN4 (via STI1 1 and 2 domains). Interacts with UBQLN1 in the presence of UBQLN4. Interacts with TRIM5. Interacts with ATG13. Interacts with MEFV and TRIM21. Interacts with WDR81; recruits MAP1LC3C to ubiquitinated protein aggregates in the aggrephagy process. Interacts with MOAP1 (via LIR motif). Interacts with reticulophagy regulators RETREG1, RETREG2 and RETREG3. Interacts with TAX1BP1. Interacts with IRGM. Interacts with SPART. Post-translationally, the precursor molecule is cleaved by ATG4 (ATG4A, ATG4B, ATG4C or ATG4D) to expose the glycine at the C-terminus and form the cytosolic form, LC3-I. The processed form is then activated by APG7L/ATG7, transferred to ATG3 and conjugated to phosphatidylethanolamine (PE) phospholipid to form the membrane-bound form, LC3-II. During non-canonical autophagy, the processed form is conjugated to phosphatidylserine (PS) phospholipid. ATG4 proteins also mediate the delipidation of PE-conjugated forms. In addition, ATG4B and ATG4D mediate delipidation of ATG8 proteins conjugated to PS during non-canonical autophagy. In terms of processing, (Microbial infection) The Legionella effector RavZ is a deconjugating enzyme that hydrolyzes the amide bond between the C-terminal glycine residue and an adjacent aromatic residue in ATG8 proteins conjugated to phosphatidylethanolamine (PE), producing an ATG8 protein that is resistant to reconjugation by the host machinery due to the cleavage of the reactive C-terminal glycine. RavZ is also able to mediate delipidation of ATG8 proteins conjugated to phosphatidylserine (PS). Phosphorylation at Ser-96 and Ser-98 by TBK1 prevents interaction with ATG4 (ATG4A, ATG4B, ATG4C or ATG4D). Phosphorylation by TBK1 on autophagosomes prevents their delipidation by ATG4 and premature removal from nascent autophagosomes. In terms of tissue distribution, most abundant in placenta, lung and ovary.

It localises to the cytoplasmic vesicle. The protein localises to the autophagosome membrane. Its subcellular location is the endomembrane system. The protein resides in the cytoplasm. It is found in the cytoskeleton. In terms of biological role, ubiquitin-like modifier that plays a crucial role in antibacterial autophagy (xenophagy) through the selective binding of CALCOCO2. Recruits all ATG8 family members to infecting bacteria such as S.typhimurium. May also play a role in aggrephagy, the macroautophagic degradation of ubiquitinated and aggregated proteins. The sequence is that of Microtubule-associated protein 1 light chain 3 gamma (MAP1LC3C) from Homo sapiens (Human).